Here is a 236-residue protein sequence, read N- to C-terminus: Small ribosomal subunit protein uS2c (236 aa).

This sequence belongs to the universal ribosomal protein uS2 family.

Its subcellular location is the plastid. The protein localises to the chloroplast. The protein is Small ribosomal subunit protein uS2c (rps2) of Amborella trichopoda.